The sequence spans 105 residues: Serine protease inhibitor Kazal-type 8 (105 aa).

The signal sequence occupies residues 1–21 (MKVIFSVAVLVLASSVWTSLA). Intrachain disulfides connect Cys-44-Cys-78, Cys-51-Cys-75, and Cys-64-Cys-96. A Kazal-like domain is found at 44–98 (CIKNIQLCWILSYFKVSEPICGSNQVTYEGECHLCSGILYEDRTVIKVHDGPCEH).

As to expression, expressed in epydiymis, in the cauda, corpus and caput.

Its subcellular location is the secreted. In terms of biological role, probable serine protease inhibitor. In Mus musculus (Mouse), this protein is Serine protease inhibitor Kazal-type 8 (Spink8).